A 156-amino-acid polypeptide reads, in one-letter code: ATP synthase subunit b (156 aa).

Residues 7–27 (LFAQMIVFFVLWWVVARFVWP) form a helical membrane-spanning segment.

Belongs to the ATPase B chain family. F-type ATPases have 2 components, F(1) - the catalytic core - and F(0) - the membrane proton channel. F(1) has five subunits: alpha(3), beta(3), gamma(1), delta(1), epsilon(1). F(0) has three main subunits: a(1), b(2) and c(10-14). The alpha and beta chains form an alternating ring which encloses part of the gamma chain. F(1) is attached to F(0) by a central stalk formed by the gamma and epsilon chains, while a peripheral stalk is formed by the delta and b chains.

It localises to the cell membrane. Functionally, f(1)F(0) ATP synthase produces ATP from ADP in the presence of a proton or sodium gradient. F-type ATPases consist of two structural domains, F(1) containing the extramembraneous catalytic core and F(0) containing the membrane proton channel, linked together by a central stalk and a peripheral stalk. During catalysis, ATP synthesis in the catalytic domain of F(1) is coupled via a rotary mechanism of the central stalk subunits to proton translocation. In terms of biological role, component of the F(0) channel, it forms part of the peripheral stalk, linking F(1) to F(0). This Polynucleobacter asymbioticus (strain DSM 18221 / CIP 109841 / QLW-P1DMWA-1) (Polynucleobacter necessarius subsp. asymbioticus) protein is ATP synthase subunit b.